We begin with the raw amino-acid sequence, 424 residues long: Serine--tRNA ligase (424 aa).

The span at methionine 1–arginine 15 shows a compositional bias: basic and acidic residues. The segment at methionine 1–valine 27 is disordered. Residue threonine 230 to glutamate 232 coordinates L-serine. ATP is bound by residues arginine 261–glutamate 263 and valine 277. An L-serine-binding site is contributed by glutamate 284. Position 348 to 351 (glutamate 348 to serine 351) interacts with ATP. Threonine 382 contributes to the L-serine binding site.

The protein belongs to the class-II aminoacyl-tRNA synthetase family. Type-1 seryl-tRNA synthetase subfamily. In terms of assembly, homodimer. The tRNA molecule binds across the dimer.

The protein resides in the cytoplasm. The enzyme catalyses tRNA(Ser) + L-serine + ATP = L-seryl-tRNA(Ser) + AMP + diphosphate + H(+). It carries out the reaction tRNA(Sec) + L-serine + ATP = L-seryl-tRNA(Sec) + AMP + diphosphate + H(+). It functions in the pathway aminoacyl-tRNA biosynthesis; selenocysteinyl-tRNA(Sec) biosynthesis; L-seryl-tRNA(Sec) from L-serine and tRNA(Sec): step 1/1. Catalyzes the attachment of serine to tRNA(Ser). Is also able to aminoacylate tRNA(Sec) with serine, to form the misacylated tRNA L-seryl-tRNA(Sec), which will be further converted into selenocysteinyl-tRNA(Sec). The chain is Serine--tRNA ligase from Cutibacterium acnes (strain DSM 16379 / KPA171202) (Propionibacterium acnes).